The following is a 118-amino-acid chain: MADMEIQSNKMSITEETQVQTRKECGKRGRKPGRKTSTEKLDMKAKLERSRQSARECRARKKLRYQYLEELVADREKAVVALRTELERLIQWNNQLSESNTPTNNDQLLQELGILKQE.

The span at 1–20 shows a compositional bias: polar residues; it reads MADMEIQSNKMSITEETQVQ. The interval 1–53 is disordered; it reads MADMEIQSNKMSITEETQVQTRKECGKRGRKPGRKTSTEKLDMKAKLERSRQS. The span at 36–53 shows a compositional bias: basic and acidic residues; it reads TSTEKLDMKAKLERSRQS. Residues 40–77 are basic motif; that stretch reads KLDMKAKLERSRQSARECRARKKLRYQYLEELVADREK. A bZIP domain is found at 40–90; it reads KLDMKAKLERSRQSARECRARKKLRYQYLEELVADREKAVVALRTELERLI. Residues 82–89 form a leucine-zipper region; the sequence is LRTELERL.

This sequence belongs to the bZIP family. ATF subfamily. In terms of assembly, homodimer. Interacts (via C-terminus) with REPTOR (via C-terminus).

The protein localises to the nucleus. The protein resides in the chromosome. Functionally, transcriptional regulator that acts in the TORC1 signaling pathway to regulate energy homeostasis and promote survival during nutrient deprivation. Interacts with REPTOR to form a transcriptional activator complex that functions downstream of TORC1 to up-regulate the expression of most target genes induced by TORC1 inhibition. In the complex, acts to enhance the binding of the transcriptional activator REPTOR to the regulatory sequences of target genes. Under normal conditions TORC1 is active, inhibiting the formation of the REPTOR/REPTOR-BP complex by phosphorylating REPTOR and mediates its cytoplasmic retention by forming a docking site for 14-3-3 proteins. Upon TORC1 inhibition resulting from nutrient stress, REPTOR is recruited into the nucleus where it interacts with REPTOR-BP and together they maintain organismal metabolism by activating the expression of target stress response genes including those involved in glycogenesis and triglyceride biosynthesis. The complex also appears to negatively regulate some aspects of TORC1-dependent larval growth. The chain is REPTOR-binding partner from Drosophila melanogaster (Fruit fly).